A 362-amino-acid chain; its full sequence is UDP-N-acetylglucosamine--N-acetylmuramyl-(pentapeptide) pyrophosphoryl-undecaprenol N-acetylglucosamine transferase (362 aa).

UDP-N-acetyl-alpha-D-glucosamine contacts are provided by residues threonine 10–glycine 12, asparagine 124, serine 194, isoleucine 249, and glutamine 294.

It belongs to the glycosyltransferase 28 family. MurG subfamily.

It is found in the cell membrane. The catalysed reaction is Mur2Ac(oyl-L-Ala-gamma-D-Glu-L-Lys-D-Ala-D-Ala)-di-trans,octa-cis-undecaprenyl diphosphate + UDP-N-acetyl-alpha-D-glucosamine = beta-D-GlcNAc-(1-&gt;4)-Mur2Ac(oyl-L-Ala-gamma-D-Glu-L-Lys-D-Ala-D-Ala)-di-trans,octa-cis-undecaprenyl diphosphate + UDP + H(+). It functions in the pathway cell wall biogenesis; peptidoglycan biosynthesis. Cell wall formation. Catalyzes the transfer of a GlcNAc subunit on undecaprenyl-pyrophosphoryl-MurNAc-pentapeptide (lipid intermediate I) to form undecaprenyl-pyrophosphoryl-MurNAc-(pentapeptide)GlcNAc (lipid intermediate II). The sequence is that of UDP-N-acetylglucosamine--N-acetylmuramyl-(pentapeptide) pyrophosphoryl-undecaprenol N-acetylglucosamine transferase from Pediococcus pentosaceus (strain ATCC 25745 / CCUG 21536 / LMG 10740 / 183-1w).